Reading from the N-terminus, the 280-residue chain is uncharacterized protein (280 aa).

A chloroplast-targeting transit peptide spans 1–51 (MATSLLLRHSSAVFFSQSSFFTKNKSFRSFTSIKMEKGEAENAVKTKKVFV).

Belongs to the NAD(P)-dependent epimerase/dehydratase family.

The protein resides in the plastid. The protein localises to the chloroplast. It localises to the plastoglobule. This is an uncharacterized protein from Arabidopsis thaliana (Mouse-ear cress).